The sequence spans 332 residues: DGAT1/2-independent enzyme synthesizing storage lipids (332 aa).

Over 1–10 (MIGSNESSTE) the chain is Lumenal. N-linked (GlcNAc...) asparagine glycosylation is present at asparagine 5. The chain crosses the membrane as a helical span at residues 11 to 31 (GPIPTSYLSFLAYLLGEWTGV). At 32–45 (EHTEDYLSYGAYLS) the chain is on the cytoplasmic side. The helical transmembrane segment at 46–66 (WVLFPLAIVFILPVAIFFFCF) threads the bilayer. Residues 67 to 332 (NTSLLLLHIY…ERFQTRQKED (266 aa)) are Lumenal-facing. Residue histidine 132 is part of the active site. N-linked (GlcNAc...) asparagine glycosylation occurs at asparagine 289.

It belongs to the diacylglycerol acyltransferase family. Highly divergent.

Its subcellular location is the endoplasmic reticulum membrane. It catalyses the reaction a 1,2-diacylglycerol + a 1,2-diacyl-sn-glycero-3-phosphocholine = a triacylglycerol + a 1-acyl-sn-glycero-3-phosphocholine. The enzyme catalyses a 1-O-alkyl-2-acyl-sn-glycero-3-phosphocholine + a 1,2-diacylglycerol = a 1-O-alkyl-sn-glycero-3-phosphocholine + a triacylglycerol. It carries out the reaction a 2-acylglycerol + an acyl-CoA = a 1,2-diacylglycerol + CoA. The catalysed reaction is an acyl-CoA + a 1,2-diacyl-sn-glycerol = a triacyl-sn-glycerol + CoA. It catalyses the reaction 2-(9Z-octadecenoyl)-glycerol + (9Z)-octadecenoyl-CoA = 1,2-di-(9Z-octadecenoyl)-glycerol + CoA. The enzyme catalyses 1,2-di-(9Z-octadecenoyl)-sn-glycerol + (9Z)-octadecenoyl-CoA = 1,2,3-tri-(9Z-octadecenoyl)-glycerol + CoA. Catalytic subunit of the alternative triglyceride biosynthesis pathway, which mediates formation of triacylglycerol from diacylglycerol and membrane phospholipids. Synthesizes triacylglycerol at the expense of membrane phospholipids, such as phosphatidylcholine (PC) and its ether-linked form (ePC), thereby altering the composition of membranes. The alternative triglyceride biosynthesis pathway is probably required to provide the energy required for rapid growth when fuel sources are limiting. It maintains mitochondrial function during periods of extracellular lipid starvation. Can also use acyl-CoA as donor: acts as a acyl-CoA:monoacylglycerol acyltransferase (MGAT), but also shows acyl-CoA:diacylglycerol acyltransferase (DGAT) activity. In Gallus gallus (Chicken), this protein is DGAT1/2-independent enzyme synthesizing storage lipids (TMEM68).